The sequence spans 439 residues: Magnesium-dependent glutamate N-prenyltransferase (439 aa).

Mg(2+) contacts are provided by Asn322, Thr326, Glu330, and Phe337.

It belongs to the terpene synthase family. Mg(2+) serves as cofactor.

The catalysed reaction is dimethylallyl diphosphate + L-glutamate = prekainate + diphosphate. It functions in the pathway secondary metabolite biosynthesis. Functionally, magnesium-dependent glutamate N-prenyltransferase: part of the gene cluster that mediates the biosynthesis of kainic acid (KA) and derivatives, natural products with neurochemical activity acting as ionotropic glutamate receptor (iGluR) agonists, thus being neurotoxins. Catalyzes the conversion of L-glutamic acid (L-Glu) to prekainic acid in the presence of dimethylallyl diphosphate (DMAPP). Can also use geranyl diphosphate (GPP) as substrate, thus leading to the formation of N-geranyl-L-glutamic acid (L-NGG). This chain is Magnesium-dependent glutamate N-prenyltransferase, found in Digenea simplex (Marine red alga).